A 60-amino-acid polypeptide reads, in one-letter code: MAVPARHTSKAKKNKRRTHYKLTAPSVKFDETTGDYSRSHRVSLKGYYKGRKIAKANAAE.

The protein belongs to the bacterial ribosomal protein bL32 family.

The protein is Large ribosomal subunit protein bL32 of Streptococcus equi subsp. zooepidemicus (strain MGCS10565).